A 207-amino-acid chain; its full sequence is Shikimate kinase (207 aa).

32–37 (GVGKST) is an ATP binding site. Ser-36 contacts Mg(2+). Residues Asp-54, Arg-78, and Gly-100 each coordinate substrate. Residue Arg-138 participates in ATP binding. A substrate-binding site is contributed by Arg-157.

It belongs to the shikimate kinase family. Monomer. Mg(2+) is required as a cofactor.

The protein resides in the cytoplasm. It catalyses the reaction shikimate + ATP = 3-phosphoshikimate + ADP + H(+). It participates in metabolic intermediate biosynthesis; chorismate biosynthesis; chorismate from D-erythrose 4-phosphate and phosphoenolpyruvate: step 5/7. Its function is as follows. Catalyzes the specific phosphorylation of the 3-hydroxyl group of shikimic acid using ATP as a cosubstrate. The polypeptide is Shikimate kinase (Bradyrhizobium diazoefficiens (strain JCM 10833 / BCRC 13528 / IAM 13628 / NBRC 14792 / USDA 110)).